The following is an 88-amino-acid chain: Small ribosomal subunit protein bS20 (88 aa).

Residues 1 to 20 are disordered; sequence MANTKSARKSLIKSKQQRKC.

Belongs to the bacterial ribosomal protein bS20 family.

Its function is as follows. Binds directly to 16S ribosomal RNA. The chain is Small ribosomal subunit protein bS20 from Blochmanniella pennsylvanica (strain BPEN).